Reading from the N-terminus, the 119-residue chain is UPF0102 protein Pmen_0910 (119 aa).

Belongs to the UPF0102 family.

This is UPF0102 protein Pmen_0910 from Ectopseudomonas mendocina (strain ymp) (Pseudomonas mendocina).